Here is a 409-residue protein sequence, read N- to C-terminus: Menaquinone reductase (409 aa).

FAD-binding positions include 11-15 (GAGPA), 44-47 (CGDG), Arg101, Val125, Asp288, and 300-301 (GI).

Belongs to the geranylgeranyl reductase family. Requires FAD as cofactor.

The catalysed reaction is menaquinone-9 + AH2 = beta-dihydromenaquinone-9 + A. Its pathway is quinol/quinone metabolism; menaquinone biosynthesis. Catalyzes the reduction of a single double bond in the isoprenoid tail of menaquinone (MK-9) in M.smegmatis, likely the beta-isoprene unit, forming the predominant form of menaquinone found in mycobacteria, MK-9(II-H2). This is Menaquinone reductase from Mycolicibacterium smegmatis (strain ATCC 700084 / mc(2)155) (Mycobacterium smegmatis).